A 401-amino-acid polypeptide reads, in one-letter code: Probable tRNA sulfurtransferase (401 aa).

Residues 63–168 (TTAEQALSYL…EREAFLYGAR (106 aa)) enclose the THUMP domain. Residues 186–187 (LL), 211–212 (YF), Arg268, Gly290, and Gln299 contribute to the ATP site.

This sequence belongs to the ThiI family.

It localises to the cytoplasm. The enzyme catalyses [ThiI sulfur-carrier protein]-S-sulfanyl-L-cysteine + a uridine in tRNA + 2 reduced [2Fe-2S]-[ferredoxin] + ATP + H(+) = [ThiI sulfur-carrier protein]-L-cysteine + a 4-thiouridine in tRNA + 2 oxidized [2Fe-2S]-[ferredoxin] + AMP + diphosphate. It carries out the reaction [ThiS sulfur-carrier protein]-C-terminal Gly-Gly-AMP + S-sulfanyl-L-cysteinyl-[cysteine desulfurase] + AH2 = [ThiS sulfur-carrier protein]-C-terminal-Gly-aminoethanethioate + L-cysteinyl-[cysteine desulfurase] + A + AMP + 2 H(+). It functions in the pathway cofactor biosynthesis; thiamine diphosphate biosynthesis. Its function is as follows. Catalyzes the ATP-dependent transfer of a sulfur to tRNA to produce 4-thiouridine in position 8 of tRNAs, which functions as a near-UV photosensor. Also catalyzes the transfer of sulfur to the sulfur carrier protein ThiS, forming ThiS-thiocarboxylate. This is a step in the synthesis of thiazole, in the thiamine biosynthesis pathway. The sulfur is donated as persulfide by IscS. The protein is Probable tRNA sulfurtransferase of Treponema pallidum (strain Nichols).